The following is a 332-amino-acid chain: Ferredoxin--NADP reductase (332 aa).

FAD contacts are provided by threonine 20, glutamate 39, glutamine 47, tyrosine 52, valine 92, phenylalanine 126, aspartate 288, and threonine 329.

This sequence belongs to the ferredoxin--NADP reductase type 2 family. As to quaternary structure, homodimer. The cofactor is FAD.

The enzyme catalyses 2 reduced [2Fe-2S]-[ferredoxin] + NADP(+) + H(+) = 2 oxidized [2Fe-2S]-[ferredoxin] + NADPH. The sequence is that of Ferredoxin--NADP reductase from Geobacillus kaustophilus (strain HTA426).